A 518-amino-acid chain; its full sequence is Membrane-bound lytic murein transglycosylase F (518 aa).

Residues 1–21 (MKKLKINYLFIGILALLLAVA) form the signal peptide. A non-LT domain region spans residues 22–269 (LWPSIPWFGK…RIEEKYLGHG (248 aa)). Residues 270–518 (DDFDYVDTRT…SRKGSEEKQN (249 aa)) are LT domain. Residue Glu-314 is part of the active site.

In the N-terminal section; belongs to the bacterial solute-binding protein 3 family. The protein in the C-terminal section; belongs to the transglycosylase Slt family.

It localises to the cell outer membrane. It catalyses the reaction Exolytic cleavage of the (1-&gt;4)-beta-glycosidic linkage between N-acetylmuramic acid (MurNAc) and N-acetylglucosamine (GlcNAc) residues in peptidoglycan, from either the reducing or the non-reducing ends of the peptidoglycan chains, with concomitant formation of a 1,6-anhydrobond in the MurNAc residue.. Murein-degrading enzyme that degrades murein glycan strands and insoluble, high-molecular weight murein sacculi, with the concomitant formation of a 1,6-anhydromuramoyl product. Lytic transglycosylases (LTs) play an integral role in the metabolism of the peptidoglycan (PG) sacculus. Their lytic action creates space within the PG sacculus to allow for its expansion as well as for the insertion of various structures such as secretion systems and flagella. In Shigella sonnei (strain Ss046), this protein is Membrane-bound lytic murein transglycosylase F.